Reading from the N-terminus, the 339-residue chain is Nitrilase 2 (339 aa).

Residue Ser2 is modified to N-acetylserine. Positions 18-290 (VRATIVQAST…EGLITADLDL (273 aa)) constitute a CN hydrolase domain. Residue Glu58 is the Proton acceptor of the active site. The Proton donor role is filled by Lys145. Cys179 acts as the Nucleophile in catalysis.

It belongs to the carbon-nitrogen hydrolase superfamily. Nitrilase family.

The protein resides in the cell membrane. It catalyses the reaction a nitrile + 2 H2O = a carboxylate + NH4(+). Functionally, can convert indole-3-acetonitrile to the plant hormone indole-3-acetic acid. The protein is Nitrilase 2 (NIT2) of Arabidopsis thaliana (Mouse-ear cress).